A 275-amino-acid chain; its full sequence is Elongation factor Ts (275 aa).

Positions 76–79 (TDFV) are involved in Mg(2+) ion dislocation from EF-Tu.

Belongs to the EF-Ts family.

The protein localises to the cytoplasm. Its function is as follows. Associates with the EF-Tu.GDP complex and induces the exchange of GDP to GTP. It remains bound to the aminoacyl-tRNA.EF-Tu.GTP complex up to the GTP hydrolysis stage on the ribosome. The polypeptide is Elongation factor Ts (Corynebacterium glutamicum (strain R)).